A 548-amino-acid polypeptide reads, in one-letter code: MPTELTDYDPSMGNKFIFVTGGVMSGLGKGITAASTGRLLANAGFDVTAVKIDPYLNVDAGTMNPYQHGEVYVLKDGGEVDLDLGNYERFLDIDMTFDHNITTGKTYRHVIEKERAGDYLGKTVQIIPHVTDDIKRRIREAAEGHDVCIIEVGGTVGDIEGMPYLEALRQFAHEEDDDDILFTHVTLVPYSKNGEQKTKPTQHSVKELRSIGLQPDILVGRCEDKLDIEAKEKIALFCDVPMDAVFSNPDVEDIYHVPLMVEEEGLDQYVMEQLGLDERALPPEERANEWRDIVTQETTDEVDIALVGKYAMEDAYLSIYESLKHAGFETNTDVNVLWVDADEMDDAHADRLSRADGIIVPGGFGSRGTEGKIEAITYARENDVPFLGLCLGFQMAVVEYARNVCGLDGAHSAEIDDETDHPVIDILPEQYEVEDMGGTMRLGAHETDIEAGTLAHELYADEQCTERHRHRYEVNPEYIETLESAGLVFSGQDQNRMEILELPDHPFFFGTQFHPEFRSRPGRASPPFVGLVETILETTDTDTEEVTA.

The interval 1 to 276 (MPTELTDYDP…DQYVMEQLGL (276 aa)) is amidoligase domain. Residue serine 25 coordinates CTP. UTP is bound at residue serine 25. 26–31 (GLGKGI) contacts ATP. Tyrosine 66 contacts L-glutamine. Residue aspartate 83 participates in ATP binding. Mg(2+) is bound by residues aspartate 83 and glutamate 151. CTP is bound by residues 158–160 (DIE), 197–202 (KTKPTQ), and lysine 233. UTP is bound by residues 197–202 (KTKPTQ) and lysine 233. Positions 303 to 541 (DIALVGKYAM…VETILETTDT (239 aa)) constitute a Glutamine amidotransferase type-1 domain. L-glutamine is bound at residue glycine 363. The Nucleophile; for glutamine hydrolysis role is filled by cysteine 390. Residues 391 to 394 (LGFQ), glutamate 414, and arginine 471 contribute to the L-glutamine site. Residues histidine 514 and glutamate 516 contribute to the active site.

Belongs to the CTP synthase family. As to quaternary structure, homotetramer.

The enzyme catalyses UTP + L-glutamine + ATP + H2O = CTP + L-glutamate + ADP + phosphate + 2 H(+). It catalyses the reaction L-glutamine + H2O = L-glutamate + NH4(+). It carries out the reaction UTP + NH4(+) + ATP = CTP + ADP + phosphate + 2 H(+). Its pathway is pyrimidine metabolism; CTP biosynthesis via de novo pathway; CTP from UDP: step 2/2. Allosterically activated by GTP, when glutamine is the substrate; GTP has no effect on the reaction when ammonia is the substrate. The allosteric effector GTP functions by stabilizing the protein conformation that binds the tetrahedral intermediate(s) formed during glutamine hydrolysis. Inhibited by the product CTP, via allosteric rather than competitive inhibition. Functionally, catalyzes the ATP-dependent amination of UTP to CTP with either L-glutamine or ammonia as the source of nitrogen. Regulates intracellular CTP levels through interactions with the four ribonucleotide triphosphates. The protein is CTP synthase of Natronomonas pharaonis (strain ATCC 35678 / DSM 2160 / CIP 103997 / JCM 8858 / NBRC 14720 / NCIMB 2260 / Gabara) (Halobacterium pharaonis).